Here is a 148-residue protein sequence, read N- to C-terminus: Deoxyuridine 5'-triphosphate nucleotidohydrolase (148 aa).

Substrate is bound by residues 68–70 (RSG), Asn-81, 85–87 (TID), and Lys-95.

It belongs to the dUTPase family. Mg(2+) serves as cofactor.

It carries out the reaction dUTP + H2O = dUMP + diphosphate + H(+). It participates in pyrimidine metabolism; dUMP biosynthesis; dUMP from dCTP (dUTP route): step 2/2. This enzyme is involved in nucleotide metabolism: it produces dUMP, the immediate precursor of thymidine nucleotides and it decreases the intracellular concentration of dUTP so that uracil cannot be incorporated into DNA. The sequence is that of Deoxyuridine 5'-triphosphate nucleotidohydrolase from Rickettsia rickettsii (strain Iowa).